Reading from the N-terminus, the 547-residue chain is MSFERTGSIFSGLAGAYVQREAHVVSLFPYAFPDENALALRARRMTATDSYPRSELSSLLEGYQRRLADLAGLEGSSNRAADQARRLAEANSLAVVTGQQAGLFTGPLYTIYKAVTCINLAKRLEAKTGQPVIPVFWVASEDHDFEEISHIKLLQGEKTVVITMTSRPDEDRFAIGHRTLPEDLAVTLESFLSHLPQSEHRLPWEETWHRLLTGPTGPHEHFAALLHKLLGPYGLVILDPLLSGLKQLPRCASFFASVLENEVSLREGLSRGVEQIRRLGYTPQVEKGPEETSLFYFHQGRRLAILRDGRGYRLRGAEITFSRDELLDLAQRQPDLFSTNVVTRPLLQDQLLPTTAYVAGPGEIAYFAAYRDVYRAMGMEMPPIVPRLSVTIIEGFVDKLLERYALSFADVPAGLEGRLREELAAQDELGIGALFEELESQVRAAYLPAVERIARWDRQMGNLAEENLDRVIAQARFLRQKVEHRHRQRCQDKRNHFRKVELHLWPGAPQERVYNIFPYLLKYGSSLIETLLEAPVEWLDSHCLFRC.

Residues 462 to 484 (NLAEENLDRVIAQARFLRQKVEH) adopt a coiled-coil conformation.

The protein belongs to the BshC family.

In terms of biological role, involved in bacillithiol (BSH) biosynthesis. May catalyze the last step of the pathway, the addition of cysteine to glucosamine malate (GlcN-Mal) to generate BSH. This Heliobacterium modesticaldum (strain ATCC 51547 / Ice1) protein is Putative cysteine ligase BshC.